Consider the following 430-residue polypeptide: Enolase (430 aa).

Q163 contributes to the (2R)-2-phosphoglycerate binding site. E205 acts as the Proton donor in catalysis. D242, E288, and D315 together coordinate Mg(2+). Positions 340, 369, 370, and 391 each coordinate (2R)-2-phosphoglycerate. Residue K340 is the Proton acceptor of the active site.

The protein belongs to the enolase family. It depends on Mg(2+) as a cofactor.

Its subcellular location is the cytoplasm. It localises to the secreted. The protein resides in the cell surface. The enzyme catalyses (2R)-2-phosphoglycerate = phosphoenolpyruvate + H2O. It functions in the pathway carbohydrate degradation; glycolysis; pyruvate from D-glyceraldehyde 3-phosphate: step 4/5. Functionally, catalyzes the reversible conversion of 2-phosphoglycerate (2-PG) into phosphoenolpyruvate (PEP). It is essential for the degradation of carbohydrates via glycolysis. The polypeptide is Enolase (Onion yellows phytoplasma (strain OY-M)).